The sequence spans 337 residues: Eukaryotic translation initiation factor 3 subunit H (337 aa).

One can recognise an MPN domain in the interval 21–153 (VQCDGLAVMK…LKAYRLTPQA (133 aa)).

The protein belongs to the eIF-3 subunit H family. In terms of assembly, component of the eukaryotic translation initiation factor 3 (eIF-3) complex. The eIF-3 complex interacts with pix. Interacts with mxt.

It is found in the cytoplasm. Component of the eukaryotic translation initiation factor 3 (eIF-3) complex, which is involved in protein synthesis of a specialized repertoire of mRNAs and, together with other initiation factors, stimulates binding of mRNA and methionyl-tRNAi to the 40S ribosome. The eIF-3 complex specifically targets and initiates translation of a subset of mRNAs involved in cell proliferation. The chain is Eukaryotic translation initiation factor 3 subunit H from Drosophila virilis (Fruit fly).